Consider the following 79-residue polypeptide: Biotin synthase auxiliary protein (79 aa).

The protein belongs to the BsaP family. Requires iron-sulfur cluster as cofactor.

Functionally, required for the activity of the biotin synthase BioB. This Mycobacterium bovis (strain ATCC BAA-935 / AF2122/97) protein is Biotin synthase auxiliary protein.